Consider the following 268-residue polypeptide: Centromere protein Q (268 aa).

Positions 1–31 are disordered; that stretch reads MSGKANASKKNFEQLKRNPKRKKDNEEVVLS. Position 31 is a phosphoserine (Ser-31). Positions 170–203 form a coiled coil; the sequence is ELMTGNIQSLKNKIQILASEVEEEEERVKQIHQI. Ser-249 is modified (phosphoserine).

It belongs to the CENP-Q/OKP1 family. As to quaternary structure, component of the CENPA-CAD complex, composed of CENPI, CENPK, CENPL, CENPO, CENPP, CENPQ, CENPR and CENPS. The CENPA-CAD complex interacts with the CENPA-NAC complex, at least composed of CENPA, CENPC, CENPH, CENPM, CENPN, CENPT and CENPU.

It localises to the nucleus. The protein localises to the chromosome. The protein resides in the centromere. Functionally, component of the CENPA-CAD (nucleosome distal) complex, a complex recruited to centromeres which is involved in assembly of kinetochore proteins, mitotic progression and chromosome segregation. May be involved in incorporation of newly synthesized CENPA into centromeres via its interaction with the CENPA-NAC complex. Plays an important role in chromosome congression and in the recruitment of CENP-O complex (which comprises CENPO, CENPP, CENPQ and CENPU), CENPE and PLK1 to the kinetochores. This chain is Centromere protein Q (CENPQ), found in Macaca fascicularis (Crab-eating macaque).